A 1272-amino-acid polypeptide reads, in one-letter code: Protein diaphanous homolog 1 (1272 aa).

M1 carries the N-acetylmethionine modification. Over residues M1 to R12 the composition is skewed to gly residues. The interval M1–L84 is disordered. Phosphoserine occurs at positions 7, 22, and 36. Residues L44–N65 show a composition bias toward basic and acidic residues. The span at A67 to L84 shows a compositional bias: polar residues. Residues L84–D449 enclose the GBD/FH3 domain. Residues M468 to V572 are a coiled coil. The segment at P573–F755 is disordered. Composition is skewed to pro residues over residues P574 to P589, I596 to P622, and S640 to P658. One can recognise an FH1 domain in the interval P583–P764. The span at E659–A674 shows a compositional bias: low complexity. Residues I675 to F753 show a composition bias toward pro residues. Position 768 is a phosphothreonine (T768). An FH2 domain is found at P769–K1171. Positions D1039–T1196 form a coiled coil. An N6-acetyllysine mark is found at K1057 and K1103. A Phosphotyrosine modification is found at Y1121. Positions D1194–N1222 constitute a DAD domain. A phosphoserine mark is found at S1251 and S1254.

Belongs to the formin homology family. Diaphanous subfamily. In terms of assembly, homodimer. Interacts with the GTP-bound form of RHOA. Interacts with RHOC, PFY1, MAPRE1 and BAIAP2. Interacts with APC; acts as a scaffold protein for MAPRE1 and APC to stabilize microtubules and promote cell migration. Interacts with SCAI. Interacts with DCAF7, via FH2 domain. Interacts with NCDN. Interacts with OSBPL10, OSBPL2, VIM, TUBB and DYN1. In terms of processing, phosphorylation at Thr-768 is stimulated by cAMP and regulates stability, complex formation and mitochondrial movement. As to expression, expressed in brain, heart, placenta, lung, kidney, pancreas, liver, skeletal muscle and cochlea. Expressed in platelets.

Its subcellular location is the cell membrane. The protein resides in the cell projection. It is found in the ruffle membrane. The protein localises to the cytoplasm. It localises to the cytoskeleton. Its subcellular location is the microtubule organizing center. The protein resides in the centrosome. It is found in the spindle. The protein localises to the nucleus. Actin nucleation and elongation factor required for the assembly of F-actin structures, such as actin cables and stress fibers. Binds to the barbed end of the actin filament and slows down actin polymerization and depolymerization. Required for cytokinesis, and transcriptional activation of the serum response factor. DFR proteins couple Rho and Src tyrosine kinase during signaling and the regulation of actin dynamics. Functions as a scaffold protein for MAPRE1 and APC to stabilize microtubules and promote cell migration. Has neurite outgrowth promoting activity. Acts in a Rho-dependent manner to recruit PFY1 to the membrane. In hear cells, it may play a role in the regulation of actin polymerization in hair cells. The MEMO1-RHOA-DIAPH1 signaling pathway plays an important role in ERBB2-dependent stabilization of microtubules at the cell cortex. It controls the localization of APC and CLASP2 to the cell membrane, via the regulation of GSK3B activity. In turn, membrane-bound APC allows the localization of the MACF1 to the cell membrane, which is required for microtubule capture and stabilization. Plays a role in the regulation of cell morphology and cytoskeletal organization. Required in the control of cell shape. Plays a role in brain development. Also acts as an actin nucleation and elongation factor in the nucleus by promoting nuclear actin polymerization inside the nucleus to drive serum-dependent SRF-MRTFA activity. The chain is Protein diaphanous homolog 1 (DIAPH1) from Homo sapiens (Human).